A 616-amino-acid chain; its full sequence is Protein RIK (616 aa).

A compositionally biased stretch (basic and acidic residues) spans 1 to 11 (MTEDRAHKVAD). The tract at residues 1-32 (MTEDRAHKVADEPAASGRQSPERKKRKWDQPA) is disordered. The 107-residue stretch at 198–304 (GTTSESISVP…AKVLAENLLD (107 aa)) folds into the KH domain. Polar residues-rich tracts occupy residues 432–449 (TQAV…TKGN), 475–484 (TESQNSQQGS), and 491–502 (LDSSGNIGSSSI). Disordered regions lie at residues 432–455 (TQAV…LDAE) and 467–616 (LPVS…HTCV). The segment covering 534-564 (LPPPLKSMLPLPPRSMPPPPPKSMPPPPPKF) has biased composition (pro residues). Basic and acidic residues-rich tracts occupy residues 565-575 (PSDEFLSRNEN) and 598-610 (SERR…EEKN).

Interacts with RS2. In terms of tissue distribution, expressed in vegetative tissues. More abundant in apices and young leaf primordia than in fully expanded leaf tissues.

It localises to the nucleus. The chain is Protein RIK from Zea mays (Maize).